Here is a 122-residue protein sequence, read N- to C-terminus: Large ribosomal subunit protein bL17 (122 aa).

Belongs to the bacterial ribosomal protein bL17 family. As to quaternary structure, part of the 50S ribosomal subunit. Contacts protein L32.

In Staphylococcus epidermidis (strain ATCC 35984 / DSM 28319 / BCRC 17069 / CCUG 31568 / BM 3577 / RP62A), this protein is Large ribosomal subunit protein bL17.